The sequence spans 122 residues: Acidic phospholipase A2 (122 aa).

7 disulfide bridges follow: Cys26–Cys115, Cys28–Cys44, Cys43–Cys95, Cys49–Cys122, Cys50–Cys88, Cys57–Cys81, and Cys75–Cys86. Ca(2+) contacts are provided by Tyr27, Gly29, and Gly31. The active site involves His47. A Ca(2+)-binding site is contributed by Asp48. Asp89 is a catalytic residue.

Belongs to the phospholipase A2 family. Group II subfamily. D49 sub-subfamily. As to quaternary structure, monomer. It depends on Ca(2+) as a cofactor. Expressed by the venom gland.

Its subcellular location is the secreted. The catalysed reaction is a 1,2-diacyl-sn-glycero-3-phosphocholine + H2O = a 1-acyl-sn-glycero-3-phosphocholine + a fatty acid + H(+). Functionally, PLA2 catalyzes the calcium-dependent hydrolysis of the 2-acyl groups in 3-sn-phosphoglycerides. In Gloydius blomhoffii (Mamushi), this protein is Acidic phospholipase A2.